The sequence spans 143 residues: Ribonuclease H (143 aa).

An RNase H type-1 domain is found at 1 to 141 (MKHVEIFTDG…VDKLASDAAL (141 aa)). Residues Asp9, Glu47, Asp69, and Asp133 each coordinate Mg(2+).

It belongs to the RNase H family. As to quaternary structure, monomer. It depends on Mg(2+) as a cofactor.

The protein resides in the cytoplasm. The catalysed reaction is Endonucleolytic cleavage to 5'-phosphomonoester.. Functionally, endonuclease that specifically degrades the RNA of RNA-DNA hybrids. This Novosphingobium aromaticivorans (strain ATCC 700278 / DSM 12444 / CCUG 56034 / CIP 105152 / NBRC 16084 / F199) protein is Ribonuclease H.